The sequence spans 279 residues: Expansin-A22 (279 aa).

Positions 1-27 are cleaved as a signal peptide; the sequence is MKLLEKMIYVEFLMIIMVIWVVPMSYG. The Expansin-like EG45 domain maps to 76-186; it reads QGACGYGNLF…RRIPCSKTGG (111 aa). One can recognise an Expansin-like CBD domain in the interval 196–275; that stretch reads YFLMVLIYNV…NWGFGQTFDG (80 aa).

The protein belongs to the expansin family. Expansin A subfamily.

Its subcellular location is the secreted. It localises to the cell wall. The protein localises to the membrane. In terms of biological role, causes loosening and extension of plant cell walls by disrupting non-covalent bonding between cellulose microfibrils and matrix glucans. No enzymatic activity has been found. In Arabidopsis thaliana (Mouse-ear cress), this protein is Expansin-A22 (EXPA22).